The sequence spans 331 residues: 6-phosphogluconolactonase (331 aa).

Position 287 is an N6-acetyllysine (lysine 287).

This sequence belongs to the cycloisomerase 2 family.

The catalysed reaction is 6-phospho-D-glucono-1,5-lactone + H2O = 6-phospho-D-gluconate + H(+). It participates in carbohydrate degradation; pentose phosphate pathway; D-ribulose 5-phosphate from D-glucose 6-phosphate (oxidative stage): step 2/3. Functionally, catalyzes the hydrolysis of 6-phosphogluconolactone to 6-phosphogluconate. This is 6-phosphogluconolactonase from Escherichia coli O6:K15:H31 (strain 536 / UPEC).